Here is a 403-residue protein sequence, read N- to C-terminus: Phosphoglycerate kinase (403 aa).

Residues 22-24 (DLN), R37, 60-63 (HLGR), R119, and R156 each bind substrate. ATP is bound by residues K206, G302, E333, and 359–362 (GGDS).

The protein belongs to the phosphoglycerate kinase family. As to quaternary structure, monomer.

The protein resides in the cytoplasm. It catalyses the reaction (2R)-3-phosphoglycerate + ATP = (2R)-3-phospho-glyceroyl phosphate + ADP. Its pathway is carbohydrate degradation; glycolysis; pyruvate from D-glyceraldehyde 3-phosphate: step 2/5. The polypeptide is Phosphoglycerate kinase (Leifsonia xyli subsp. xyli (strain CTCB07)).